Here is a 208-residue protein sequence, read N- to C-terminus: Holliday junction resolvase RecU (208 aa).

Positions 1 to 28 (MNYPNGKPYSKNKPLDGRKSSPFSSNIE) are disordered. Residues Thr87, Asp89, Glu102, and Gln121 each coordinate Mg(2+).

It belongs to the RecU family. Requires Mg(2+) as cofactor.

Its subcellular location is the cytoplasm. The enzyme catalyses Endonucleolytic cleavage at a junction such as a reciprocal single-stranded crossover between two homologous DNA duplexes (Holliday junction).. Its function is as follows. Endonuclease that resolves Holliday junction intermediates in genetic recombination. Cleaves mobile four-strand junctions by introducing symmetrical nicks in paired strands. Promotes annealing of linear ssDNA with homologous dsDNA. Required for DNA repair, homologous recombination and chromosome segregation. This is Holliday junction resolvase RecU from Staphylococcus epidermidis (strain ATCC 12228 / FDA PCI 1200).